The sequence spans 374 residues: tRNA-specific 2-thiouridylase MnmA (374 aa).

ATP contacts are provided by residues 12-19 (GMSGGVDS) and Met38. The interaction with target base in tRNA stretch occupies residues 98–100 (NPD). The active-site Nucleophile is Cys103. A disulfide bridge connects residues Cys103 and Cys202. ATP is bound at residue Gly128. Residues 152 to 154 (KDQ) form an interaction with tRNA region. Cys202 serves as the catalytic Cysteine persulfide intermediate. The tract at residues 316–317 (RY) is interaction with tRNA.

Belongs to the MnmA/TRMU family.

It is found in the cytoplasm. The catalysed reaction is S-sulfanyl-L-cysteinyl-[protein] + uridine(34) in tRNA + AH2 + ATP = 2-thiouridine(34) in tRNA + L-cysteinyl-[protein] + A + AMP + diphosphate + H(+). Functionally, catalyzes the 2-thiolation of uridine at the wobble position (U34) of tRNA, leading to the formation of s(2)U34. This Vibrio vulnificus (strain CMCP6) protein is tRNA-specific 2-thiouridylase MnmA.